We begin with the raw amino-acid sequence, 285 residues long: GPN-loop GTPase 3 (285 aa).

13–18 (GSGKST) contributes to the GTP binding site. A Gly-Pro-Asn (GPN)-loop; involved in dimer interface motif is present at residues 72 to 74 (GPN). GTP is bound at residue 174 to 177 (TKMD). The interval 261–285 (KEPKENEEDKSENFDEFFQDRADEP) is disordered. A compositionally biased stretch (acidic residues) spans 265-277 (ENEEDKSENFDEF).

Belongs to the GPN-loop GTPase family. As to quaternary structure, heterodimer with gpn1. Binds to RNA polymerase II (RNAPII).

In terms of biological role, small GTPase required for proper localization of RNA polymerase II (RNAPII). May act at an RNAP assembly step prior to nuclear import. The polypeptide is GPN-loop GTPase 3 (Xenopus tropicalis (Western clawed frog)).